A 314-amino-acid polypeptide reads, in one-letter code: Olfactory receptor 5P6 (314 aa).

Residues methionine 1–valine 28 lie on the Extracellular side of the membrane. An N-linked (GlcNAc...) asparagine glycan is attached at asparagine 8. The chain crosses the membrane as a helical span at residues isoleucine 29 to isoleucine 49. The Cytoplasmic segment spans residues leucine 50–glutamine 57. Residues leucine 58–serine 78 traverse the membrane as a helical segment. Residues serine 79–isoleucine 102 are Extracellular-facing. Residues cysteine 100 and cysteine 192 are joined by a disulfide bond. A helical transmembrane segment spans residues glutamine 103 to tyrosine 123. Residues aspartate 124–serine 136 are Cytoplasmic-facing. The chain crosses the membrane as a helical span at residues threonine 137–leucine 157. Topologically, residues asparagine 158 to alanine 199 are extracellular. Residues threonine 200–serine 220 traverse the membrane as a helical segment. Topologically, residues tyrosine 221 to alanine 240 are cytoplasmic. A helical membrane pass occupies residues phenylalanine 241–isoleucine 261. Over tyrosine 262–asparagine 274 the chain is Extracellular. Residues lysine 275–leucine 295 form a helical membrane-spanning segment. Topologically, residues arginine 296 to serine 314 are cytoplasmic.

The protein belongs to the G-protein coupled receptor 1 family.

It localises to the cell membrane. Functionally, potential odorant receptor. The polypeptide is Olfactory receptor 5P6 (Mus musculus (Mouse)).